The primary structure comprises 87 residues: Small ribosomal subunit protein eS21 (87 aa).

Belongs to the eukaryotic ribosomal protein eS21 family. Component of the small ribosomal subunit. Mature ribosomes consist of a small (40S) and a large (60S) subunit. The 40S subunit contains about 33 different proteins and 1 molecule of RNA (18S). The 60S subunit contains about 49 different proteins and 3 molecules of RNA (25S, 5.8S and 5S).

The protein localises to the cytoplasm. Functionally, required for the processing of the 20S rRNA-precursor to mature 18S rRNA in a late step of the maturation of 40S ribosomal subunits. Has a physiological role leading to 18S rRNA stability. The sequence is that of Small ribosomal subunit protein eS21 (RPS21) from Candida albicans (Yeast).